The chain runs to 421 residues: Putative B3 domain-containing protein Os08g0333500 (421 aa).

Positions M1–K51 form a DNA-binding region, TF-B3. Residues S92–T121 form a disordered region. A compositionally biased stretch (basic and acidic residues) spans S95 to S107. Residues M108–T121 are compositionally biased toward polar residues.

The protein resides in the nucleus. The sequence is that of Putative B3 domain-containing protein Os08g0333500 from Oryza sativa subsp. japonica (Rice).